Here is a 378-residue protein sequence, read N- to C-terminus: MRIGMICPYSFDVPGGVQSHVLQLAEVMRTRGHLVSVLAPASPHAALPDYFVSGGRAVPIPYNGSVARLRFGPATHRKVKKWLAHGDFDVLHLHEPNAPSLSMLALNIAEGPIVATFHTSTTKSLTLTVFQGILRPMHEKIVGRIAVSDLARRWQMEALGSDAVEIPNGVDVDSFASAARLDGYPRQGKTVLFLGRYDEPRKGMAVLLDALPKVVQRFPDVQLLIVGHGDADQLRGQAGRLAAHLRFLGQVDDAGKASAMRSADVYCAPNTGGESFGIVLVEAMAAGTAVVASDLDAFRRVLRDGEVGHLVPVDPPDLQAAALADGLIAVLENDVLRERYVAAGNAAVRRYDWSVVASQIMRVYETVAGSGAKVQVAS.

Residues Tyr-9 and Gly-16 each coordinate GDP-alpha-D-mannose. Residues Gln-18, 62 to 63 (YN), and Arg-68 each bind a 1,2-diacyl-sn-glycero-3-phospho-(1D-myo-inositol). Residues Arg-196, 201 to 202 (RK), 251 to 253 (VDD), Lys-256, 274 to 278 (ESFGI), and Glu-282 each bind GDP-alpha-D-mannose.

Belongs to the glycosyltransferase group 1 family. As to quaternary structure, monomer. Mg(2+) serves as cofactor.

Its subcellular location is the cell membrane. It catalyses the reaction a 1,2-diacyl-sn-glycero-3-phospho-(1D-myo-inositol) + GDP-alpha-D-mannose = a 1,2-diacyl-sn-glycero-3-phospho-[alpha-D-mannopyranosyl-(1&lt;-&gt;6)-D-myo-inositol] + GDP + H(+). Its pathway is phospholipid metabolism; phosphatidylinositol metabolism. Involved in the biosynthesis of phosphatidyl-myo-inositol mannosides (PIM) which are early precursors in the biosynthesis of lipomannans (LM) and lipoarabinomannans (LAM). Catalyzes the addition of a mannosyl residue from GDP-D-mannose (GDP-Man) to the position 2 of the carrier lipid phosphatidyl-myo-inositol (PI) to generate a phosphatidyl-myo-inositol bearing an alpha-1,2-linked mannose residue (PIM1). This is Phosphatidyl-myo-inositol mannosyltransferase from Mycobacterium bovis (strain ATCC BAA-935 / AF2122/97).